The following is a 63-amino-acid chain: Cecropin-B (63 aa).

The N-terminal stretch at 1 to 23 (MNFNKIFVFVALILAISLGNSEA) is a signal peptide. Arg62 bears the Arginine amide mark.

It belongs to the cecropin family. In terms of tissue distribution, strongly expressed in larval, pupal and adult fat body and hemocytes after injection of bacteria. Maximal expression is seen in pupae.

Its subcellular location is the secreted. In terms of biological role, cecropins have lytic and antibacterial activity against several Gram-positive and Gram-negative bacteria. The polypeptide is Cecropin-B (CecB) (Drosophila melanogaster (Fruit fly)).